Consider the following 201-residue polypeptide: Large ribosomal subunit protein uL4 (201 aa).

Positions 39–67 are disordered; that stretch reads ARQGSRAQKTRSEVAGGGRKPWKQKGSGR.

The protein belongs to the universal ribosomal protein uL4 family. As to quaternary structure, part of the 50S ribosomal subunit.

Functionally, one of the primary rRNA binding proteins, this protein initially binds near the 5'-end of the 23S rRNA. It is important during the early stages of 50S assembly. It makes multiple contacts with different domains of the 23S rRNA in the assembled 50S subunit and ribosome. Its function is as follows. Forms part of the polypeptide exit tunnel. The chain is Large ribosomal subunit protein uL4 from Marinomonas sp. (strain MWYL1).